Here is a 279-residue protein sequence, read N- to C-terminus: tRNA dimethylallyltransferase (279 aa).

10-17 (GPTASGKS) contributes to the ATP binding site. Position 12–17 (12–17 (TASGKS)) interacts with substrate.

The protein belongs to the IPP transferase family. As to quaternary structure, monomer. Mg(2+) serves as cofactor.

It carries out the reaction adenosine(37) in tRNA + dimethylallyl diphosphate = N(6)-dimethylallyladenosine(37) in tRNA + diphosphate. Catalyzes the transfer of a dimethylallyl group onto the adenine at position 37 in tRNAs that read codons beginning with uridine, leading to the formation of N6-(dimethylallyl)adenosine (i(6)A). The sequence is that of tRNA dimethylallyltransferase from Roseobacter denitrificans (strain ATCC 33942 / OCh 114) (Erythrobacter sp. (strain OCh 114)).